The chain runs to 564 residues: H/ACA ribonucleoprotein complex non-core subunit NAF1 (564 aa).

Disordered regions lie at residues 1–29, 108–218, 238–264, 387–489, and 538–564; these read MESE…ELGK, LVVQ…DSEG, DEDD…KVRG, ASWE…HPSY, and PHMY…PPPS. The span at 146–157 shows a compositional bias: low complexity; it reads ASGLSLLAAYSS. Residues 238–249 are compositionally biased toward acidic residues; sequence DEDDEDFDEDGA. Thr250 carries the phosphothreonine modification. Ser254 carries the phosphoserine modification. Residues 388-402 are compositionally biased toward basic and acidic residues; it reads SWEHDVEPPARYVDH. Phosphoserine is present on Ser403. The segment covering 426-446 has biased composition (low complexity); the sequence is STDSVDTVTSVATTATKASSV. Thr427 is modified (phosphothreonine). Position 429 is a phosphoserine (Ser429). Phosphothreonine is present on Thr432. Over residues 468-489 the composition is skewed to polar residues; that stretch reads PSINQHNQNQPQDEQYNFHPSY. Positions 538-553 are enriched in pro residues; it reads PHMYPPPPPFAPPPPN. Polar residues predominate over residues 554–564; that stretch reads NQSHQGQPPPS.

Belongs to the NAF1 family. As to quaternary structure, during assembly of the complex, component of the box H/ACA small nucleolar ribonucleoprotein (H/ACA snoRNP) complex.

The protein localises to the nucleus. Functionally, RNA-binding protein required for the maturation of the box H/ACA small nucleolar ribonucleoprotein (H/ACA snoRNP) complex and ribosome biogenesis. During assembly of the H/ACA snoRNP complex it associates with the complex and dissociates during complex maturation, becoming replaced by Gar1 to yield mature H/ACA snoRNP complex. The polypeptide is H/ACA ribonucleoprotein complex non-core subunit NAF1 (Drosophila melanogaster (Fruit fly)).